We begin with the raw amino-acid sequence, 833 residues long: Leucine--tRNA ligase (833 aa).

A 'HIGH' region motif is present at residues 41-52; it reads PYPSGAGLHVGH. The 'KMSKS' region motif lies at 610-614; sequence KMSKS. K613 provides a ligand contact to ATP.

The protein belongs to the class-I aminoacyl-tRNA synthetase family.

The protein localises to the cytoplasm. It catalyses the reaction tRNA(Leu) + L-leucine + ATP = L-leucyl-tRNA(Leu) + AMP + diphosphate. The protein is Leucine--tRNA ligase of Streptococcus agalactiae serotype Ia (strain ATCC 27591 / A909 / CDC SS700).